The sequence spans 835 residues: Microcephalin (835 aa).

A BRCT 1 domain is found at 1 to 93 (MAAPILKDVV…AHIDESLFPA (93 aa)). Residues 184-206 (KEKRENLSPTSSQLIQQSHDNPS) are disordered. Positions 190 to 206 (LSPTSSQLIQQSHDNPS) are enriched in polar residues. Ser-279, Ser-287, Ser-296, and Ser-333 each carry phosphoserine. Phosphothreonine is present on Thr-335. The span at 346 to 361 (HSRPRSSSVKRKRVSH) shows a compositional bias: basic residues. 2 disordered regions span residues 346–376 (HSRP…RKRS) and 418–442 (PDNL…PAQF). At Ser-548 the chain carries Phosphoserine. Residues 557–582 (GLKSTQNRGTTSKISNSSEGEAQSEH) are disordered. Residues 559 to 577 (KSTQNRGTTSKISNSSEGE) are compositionally biased toward polar residues. BRCT domains lie at 640 to 730 (SGRG…PFEL) and 751 to 833 (YRGT…NYLL).

In terms of assembly, interacts with CDC27 and maybe other components of the APC/C complex. Interacts with histone variant H2AX under DNA damage conditions.

It localises to the cytoplasm. It is found in the cytoskeleton. Its subcellular location is the microtubule organizing center. The protein localises to the centrosome. Implicated in chromosome condensation and DNA damage induced cellular responses. May play a role in neurogenesis and regulation of the size of the cerebral cortex. The protein is Microcephalin of Gorilla gorilla gorilla (Western lowland gorilla).